Consider the following 337-residue polypeptide: tRNA N6-adenosine threonylcarbamoyltransferase (337 aa).

Residues His-114 and His-118 each contribute to the Fe cation site. Substrate-binding positions include 136 to 140, Asp-169, Gly-182, Asp-186, and Asn-275; that span reads LVSGG. Position 301 (Asp-301) interacts with Fe cation.

Belongs to the KAE1 / TsaD family. Requires Fe(2+) as cofactor.

The protein localises to the cytoplasm. The enzyme catalyses L-threonylcarbamoyladenylate + adenosine(37) in tRNA = N(6)-L-threonylcarbamoyladenosine(37) in tRNA + AMP + H(+). In terms of biological role, required for the formation of a threonylcarbamoyl group on adenosine at position 37 (t(6)A37) in tRNAs that read codons beginning with adenine. Is involved in the transfer of the threonylcarbamoyl moiety of threonylcarbamoyl-AMP (TC-AMP) to the N6 group of A37, together with TsaE and TsaB. TsaD likely plays a direct catalytic role in this reaction. This is tRNA N6-adenosine threonylcarbamoyltransferase from Streptococcus thermophilus (strain CNRZ 1066).